The following is a 611-amino-acid chain: Phosphomethylpyrimidine synthase (611 aa).

Residues Asn218, Met247, Tyr276, His312, 332–334 (SRG), 373–376 (DGLR), and Glu412 each bind substrate. Position 416 (His416) interacts with Zn(2+). Tyr439 is a substrate binding site. His480 serves as a coordination point for Zn(2+). Cys560, Cys563, and Cys568 together coordinate [4Fe-4S] cluster.

It belongs to the ThiC family. Homodimer. Requires [4Fe-4S] cluster as cofactor.

It catalyses the reaction 5-amino-1-(5-phospho-beta-D-ribosyl)imidazole + S-adenosyl-L-methionine = 4-amino-2-methyl-5-(phosphooxymethyl)pyrimidine + CO + 5'-deoxyadenosine + formate + L-methionine + 3 H(+). It functions in the pathway cofactor biosynthesis; thiamine diphosphate biosynthesis. In terms of biological role, catalyzes the synthesis of the hydroxymethylpyrimidine phosphate (HMP-P) moiety of thiamine from aminoimidazole ribotide (AIR) in a radical S-adenosyl-L-methionine (SAM)-dependent reaction. In Caulobacter sp. (strain K31), this protein is Phosphomethylpyrimidine synthase.